Here is a 200-residue protein sequence, read N- to C-terminus: Recombination protein RecR (200 aa).

The C4-type zinc-finger motif lies at 58-75 (CSNCFCLKISQTSPCNFC). In terms of domain architecture, Toprim spans 82–177 (SSLCIVATPK…KISRLALGMP (96 aa)).

Belongs to the RecR family.

May play a role in DNA repair. It seems to be involved in an RecBC-independent recombinational process of DNA repair. It may act with RecF and RecO. This Chlamydia trachomatis serovar D (strain ATCC VR-885 / DSM 19411 / UW-3/Cx) protein is Recombination protein RecR.